The following is a 528-amino-acid chain: Bifunctional dihydrofolate reductase-thymidylate synthase (528 aa).

The segment at 1–20 is disordered; that stretch reads MASELLANPTNGSGITRPDP. The region spanning 23-200 is the DHFR domain; sequence TYQVVVAATQ…IRYCFTTYVR (178 aa). Residue valine 27 coordinates substrate. NADP(+) is bound by residues alanine 29 and 35–41; that span reads GIGKDGK. Residue aspartate 49 coordinates substrate. NADP(+) contacts are provided by residues 73–75 and 94–97; these read RKT and LTRS. Substrate is bound by residues isoleucine 136, tyrosine 142, and threonine 157. Position 137–144 (137–144) interacts with NADP(+); that stretch reads GGGQIYRE. A thymidylate synthase region spans residues 202–528; it reads RNSVAELTSQ…HQKIEMKMAV (327 aa). Arginine 264 is a dUMP binding site. Cysteine 409 is a catalytic residue. Residues histidine 410, 428–432, asparagine 440, and 470–472 contribute to the dUMP site; these read QRSAD and HVY.

This sequence in the N-terminal section; belongs to the dihydrofolate reductase family. The protein in the C-terminal section; belongs to the thymidylate synthase family.

The catalysed reaction is (6S)-5,6,7,8-tetrahydrofolate + NADP(+) = 7,8-dihydrofolate + NADPH + H(+). It carries out the reaction dUMP + (6R)-5,10-methylene-5,6,7,8-tetrahydrofolate = 7,8-dihydrofolate + dTMP. Its pathway is cofactor biosynthesis; tetrahydrofolate biosynthesis; 5,6,7,8-tetrahydrofolate from 7,8-dihydrofolate: step 1/1. Bifunctional enzyme. Involved in de novo dTMP biosynthesis. Key enzyme in folate metabolism. Can play two different roles depending on the source of dihydrofolate: de novo synthesis of tetrahydrofolate or recycling of the dihydrofolate released as one of the end products of the TS catalyzed reaction. Catalyzes an essential reaction for de novo glycine and purine synthesis, DNA precursor synthesis, and for the conversion of dUMP to dTMP. The chain is Bifunctional dihydrofolate reductase-thymidylate synthase from Daucus carota (Wild carrot).